The following is a 428-amino-acid chain: Enolase 3 (428 aa).

Glutamine 163 is a binding site for (2R)-2-phosphoglycerate. Residue glutamate 205 is the Proton donor of the active site. Residues aspartate 242, glutamate 286, and aspartate 313 each contribute to the Mg(2+) site. 4 residues coordinate (2R)-2-phosphoglycerate: lysine 338, arginine 367, serine 368, and lysine 389. Lysine 338 (proton acceptor) is an active-site residue.

The protein belongs to the enolase family. Mg(2+) is required as a cofactor.

The protein resides in the cytoplasm. It localises to the secreted. Its subcellular location is the cell surface. The catalysed reaction is (2R)-2-phosphoglycerate = phosphoenolpyruvate + H2O. It participates in carbohydrate degradation; glycolysis; pyruvate from D-glyceraldehyde 3-phosphate: step 4/5. Its function is as follows. Catalyzes the reversible conversion of 2-phosphoglycerate (2-PG) into phosphoenolpyruvate (PEP). It is essential for the degradation of carbohydrates via glycolysis. This chain is Enolase 3, found in Lactobacillus johnsonii (strain CNCM I-12250 / La1 / NCC 533).